A 234-amino-acid polypeptide reads, in one-letter code: Phosphoglycolate phosphatase (234 aa).

Aspartate 15 (nucleophile) is an active-site residue. Aspartate 15, aspartate 17, and aspartate 177 together coordinate Mg(2+).

The protein belongs to the HAD-like hydrolase superfamily. CbbY/CbbZ/Gph/YieH family. In terms of assembly, monomer. Mg(2+) serves as cofactor. It depends on chloride as a cofactor.

It catalyses the reaction 2-phosphoglycolate + H2O = glycolate + phosphate. Its pathway is organic acid metabolism; glycolate biosynthesis; glycolate from 2-phosphoglycolate: step 1/1. Specifically catalyzes the dephosphorylation of 2-phosphoglycolate. Is involved in the dissimilation of the intracellular 2-phosphoglycolate formed during the DNA repair of 3'-phosphoglycolate ends, a major class of DNA lesions induced by oxidative stress. This is Phosphoglycolate phosphatase from Photorhabdus laumondii subsp. laumondii (strain DSM 15139 / CIP 105565 / TT01) (Photorhabdus luminescens subsp. laumondii).